The primary structure comprises 711 residues: Protein mono-ADP-ribosyltransferase PARP12 (711 aa).

3 consecutive C3H1-type zinc fingers follow at residues 103 to 128, 164 to 188, and 189 to 211; these read LCKF…HNLK, ICLH…IKLH, and ICQY…HEFT. The tract at residues 247–279 is disordered; it reads SALSKVSPSPAGPQGSSERKDSSGPVSPGTPSQ. Serine 268 is modified (phosphoserine). 2 C3H1-type zinc fingers span residues 280 to 307 and 281 to 306; these read EESE…HFHL and ESEQ…VHFH. 2 WWE domains span residues 308–371 and 374–468; these read PYRW…RLST and SVTK…KVCR. Position 484 is an ADP-ribosylcysteine (cysteine 484). The PARP catalytic domain maps to 494–708; that stretch reads IPDYWDPAAL…IFVALGNLFT (215 aa). Residues aspartate 610 and aspartate 621 each carry the ADP-ribosyl aspartic acid modification.

This sequence belongs to the ARTD/PARP family. Interacts with PARP11; this interaction plays a key role in zika virus suppression. Interacts with ISG15. In terms of processing, auto-mono-ADP-ribosylated. Phosphorylated by PRKD1.

The protein localises to the nucleus. It is found in the golgi apparatus. Its subcellular location is the trans-Golgi network. The protein resides in the cytoplasm. It localises to the stress granule. The catalysed reaction is L-aspartyl-[protein] + NAD(+) = 4-O-(ADP-D-ribosyl)-L-aspartyl-[protein] + nicotinamide. It carries out the reaction L-cysteinyl-[protein] + NAD(+) = S-(ADP-D-ribosyl)-L-cysteinyl-[protein] + nicotinamide + H(+). Its function is as follows. Mono-ADP-ribosyltransferase that mediates mono-ADP-ribosylation of target proteins. Displays anti-alphavirus activity during IFN-gamma immune activation by directly ADP-ribosylating the alphaviral non-structural proteins nsP3 and nsP4. Acts as a component of the PRKD1-driven regulatory cascade that selectively controls a major branch of the basolateral transport pathway by catalyzing the MARylation of GOLGA1. Acts also as a key regulator of mitochondrial function, protein translation, and inflammation. Inhibits PINK1/Parkin-dependent mitophagy and promotes cartilage degeneration by inhibiting the ubiquitination and SUMOylation of MFN1/2 by upregulating ISG15 and ISGylation. The sequence is that of Protein mono-ADP-ribosyltransferase PARP12 from Mus musculus (Mouse).